The chain runs to 37 residues: Cytochrome b6-f complex subunit 5 (37 aa).

The helical transmembrane segment at 5–25 threads the bilayer; sequence LLSGIVLGLVPITITGLLVTA.

Belongs to the PetG family. The 4 large subunits of the cytochrome b6-f complex are cytochrome b6, subunit IV (17 kDa polypeptide, PetD), cytochrome f and the Rieske protein, while the 4 small subunits are PetG, PetL, PetM and PetN. The complex functions as a dimer.

Its subcellular location is the plastid. The protein localises to the chloroplast thylakoid membrane. Functionally, component of the cytochrome b6-f complex, which mediates electron transfer between photosystem II (PSII) and photosystem I (PSI), cyclic electron flow around PSI, and state transitions. PetG is required for either the stability or assembly of the cytochrome b6-f complex. In Tupiella akineta (Green alga), this protein is Cytochrome b6-f complex subunit 5.